A 369-amino-acid chain; its full sequence is Maltose/maltodextrin import ATP-binding protein MalK (369 aa).

An ABC transporter domain is found at 4 to 234; it reads VQLRNVTKAW…PADRFVAGFI (231 aa). Position 36–43 (36–43) interacts with ATP; that stretch reads GPSGCGKS.

It belongs to the ABC transporter superfamily. Maltooligosaccharide importer (TC 3.A.1.1.1) family. As to quaternary structure, the complex is composed of two ATP-binding proteins (MalK), two transmembrane proteins (MalG and MalK) and a solute-binding protein (MalE).

Its subcellular location is the cell inner membrane. It carries out the reaction D-maltose(out) + ATP + H2O = D-maltose(in) + ADP + phosphate + H(+). In terms of biological role, part of the ABC transporter complex MalEFGK involved in maltose/maltodextrin import. Responsible for energy coupling to the transport system. This Salmonella choleraesuis (strain SC-B67) protein is Maltose/maltodextrin import ATP-binding protein MalK.